Consider the following 240-residue polypeptide: Demethylmenaquinone methyltransferase (240 aa).

S-adenosyl-L-methionine is bound by residues Thr-62, Asp-80, 102–103 (DA), and Ser-119.

The protein belongs to the class I-like SAM-binding methyltransferase superfamily. MenG/UbiE family.

It catalyses the reaction a 2-demethylmenaquinol + S-adenosyl-L-methionine = a menaquinol + S-adenosyl-L-homocysteine + H(+). The protein operates within quinol/quinone metabolism; menaquinone biosynthesis; menaquinol from 1,4-dihydroxy-2-naphthoate: step 2/2. Its function is as follows. Methyltransferase required for the conversion of demethylmenaquinol (DMKH2) to menaquinol (MKH2). This chain is Demethylmenaquinone methyltransferase, found in Beutenbergia cavernae (strain ATCC BAA-8 / DSM 12333 / CCUG 43141 / JCM 11478 / NBRC 16432 / NCIMB 13614 / HKI 0122).